We begin with the raw amino-acid sequence, 222 residues long: Deoxyribose-phosphate aldolase (222 aa).

Asp-92 (proton donor/acceptor) is an active-site residue. The active-site Schiff-base intermediate with acetaldehyde is Lys-156. The Proton donor/acceptor role is filled by Lys-185.

The protein belongs to the DeoC/FbaB aldolase family. DeoC type 1 subfamily. In terms of assembly, homodimer.

It is found in the cytoplasm. It catalyses the reaction 2-deoxy-D-ribose 5-phosphate = D-glyceraldehyde 3-phosphate + acetaldehyde. The protein operates within carbohydrate degradation; 2-deoxy-D-ribose 1-phosphate degradation; D-glyceraldehyde 3-phosphate and acetaldehyde from 2-deoxy-alpha-D-ribose 1-phosphate: step 2/2. Its activity is regulated as follows. Shows high stability to high concentrations of acetaldehyde. In terms of biological role, catalyzes a reversible aldol reaction between acetaldehyde and D-glyceraldehyde 3-phosphate to generate 2-deoxy-D-ribose 5-phosphate. In Aciduliprofundum boonei (strain DSM 19572 / T469), this protein is Deoxyribose-phosphate aldolase.